The following is a 445-amino-acid chain: tRNA-2-methylthio-N(6)-dimethylallyladenosine synthase (445 aa).

Residues 3–120 (RKLFIQTHGC…LPGLITQAAS (118 aa)) enclose the MTTase N-terminal domain. Positions 12, 49, 83, 157, 161, and 164 each coordinate [4Fe-4S] cluster. The region spanning 143–375 (SVDGPSAFVS…QQRINQNVQD (233 aa)) is the Radical SAM core domain. In terms of domain architecture, TRAM spans 378–442 (RKMVGSTQRI…SNSLLGTDPR (65 aa)).

It belongs to the methylthiotransferase family. MiaB subfamily. In terms of assembly, monomer. The cofactor is [4Fe-4S] cluster.

It localises to the cytoplasm. The catalysed reaction is N(6)-dimethylallyladenosine(37) in tRNA + (sulfur carrier)-SH + AH2 + 2 S-adenosyl-L-methionine = 2-methylsulfanyl-N(6)-dimethylallyladenosine(37) in tRNA + (sulfur carrier)-H + 5'-deoxyadenosine + L-methionine + A + S-adenosyl-L-homocysteine + 2 H(+). Its function is as follows. Catalyzes the methylthiolation of N6-(dimethylallyl)adenosine (i(6)A), leading to the formation of 2-methylthio-N6-(dimethylallyl)adenosine (ms(2)i(6)A) at position 37 in tRNAs that read codons beginning with uridine. The chain is tRNA-2-methylthio-N(6)-dimethylallyladenosine synthase from Alcanivorax borkumensis (strain ATCC 700651 / DSM 11573 / NCIMB 13689 / SK2).